The chain runs to 240 residues: Predicted GPI-anchored protein 58 (240 aa).

A signal peptide spans 1-18 (MQFSTLVSLAAVIVSTNA). The interval 41-216 (HTNCPASSPA…NSTGPSSVPT (176 aa)) is disordered. Residues 51-86 (TPAPAPSASAPAPPAPEQPEPSAPAPAPSAPAPEQP) are compositionally biased toward pro residues. Residues 87–103 (EQPATPATPAAPATPAT) are compositionally biased toward low complexity. Pro residues-rich tracts occupy residues 104–137 (PAAPEPSAPAPEQPASPAAPAPAPSAPAPAPEQP) and 153–192 (APAPSAPAPPAPEQPESAPAPAPSAPAPEQPESSPAPAPS). Low complexity predominate over residues 193–216 (APASVPEQPASSVSNSTGPSSVPT). Residue asparagine 207 is glycosylated (N-linked (GlcNAc...) asparagine). Glycine 219 carries GPI-anchor amidated glycine lipidation. Positions 220–240 (AAAKQYITGSVAVIAAALLAL) are cleaved as a propeptide — removed in mature form.

Its subcellular location is the cell membrane. The chain is Predicted GPI-anchored protein 58 (PGA58) from Candida albicans (strain SC5314 / ATCC MYA-2876) (Yeast).